The primary structure comprises 200 residues: Ras-related protein Rab-10 (200 aa).

S18, G19, V20, G21, K22, T23, C24, N35, T36, S40, and T41 together coordinate GTP. T23 lines the Mg(2+) pocket. 2 consecutive short sequence motifs (switch) follow at residues 32 to 46 (DAFN…GIDF) and 64 to 81 (DTAG…YYRG). The Mg(2+) site is built by T41 and D64. GTP is bound at residue G67. T73 bears the Phosphothreonine; by LRRK2 mark. At K102 the chain carries N6-acetyllysine. A Glycyl lysine isopeptide (Lys-Gly) (interchain with G-Cter in ubiquitin) cross-link involves residue K102. N122, K123, D125, and M126 together coordinate GTP. A Glycyl lysine isopeptide (Lys-Gly) (interchain with G-Cter in ubiquitin) cross-link involves residue K136. The GTP site is built by S152, A153, and K154. K154 participates in a covalent cross-link: Glycyl lysine isopeptide (Lys-Gly) (interchain with G-Cter in ubiquitin). Residues C199 and C200 are each lipidated (S-geranylgeranyl cysteine).

The protein belongs to the small GTPase superfamily. Rab family. As to quaternary structure, interacts with MYO5A; mediates the transport to the plasma membrane of SLC2A4/GLUT4 storage vesicles. Interacts with GDI1 and with GDI2; negatively regulates RAB10 association with membranes and activation. Interacts (GDP-bound form) with LLGL1; the interaction is direct and promotes RAB10 association with membranes and activation through competition with the Rab inhibitor GDI1. Interacts with EXOC4; probably associates with the exocyst. Interacts (GTP-bound form) with MICALCL, MICAL1, MICAL3, EHBP1 and EHBP1L1; at least in case of MICAL1 two molecules of RAB10 can bind to one molecule of MICAL1. Interacts with TBC1D13. Interacts with SEC16A. Interacts with CHM and CHML. Interacts with LRRK2; interaction facilitates phosphorylation of Thr-73. Interacts (when phosphorylated on Thr-73) with RILPL1 and RILPL2. Interacts with TBC1D21. Interacts with MARCKS. The cofactor is Mg(2+). Ubiquitinated upon Legionella pneumophila infection. Ubiquitination does not lead to proteasomal degradation. Post-translationally, phosphorylation of Thr-73 in the switch II region by LRRK2 prevents the association of dRAB regulatory proteins, including CHM, CHML and RAB GDP dissociation inhibitors GDI1 and GDI2. Phosphorylation of Thr-73 by LRRK2 is stimulated by RAB29 and RAB32. Phosphorylation by LRRK2 is required for localization to stressed lysosomes. In terms of tissue distribution, expressed in the hippocampus. Expressed in neutrophils (at protein level). Expressed in the testis (at protein level).

The protein resides in the cytoplasmic vesicle membrane. The protein localises to the golgi apparatus membrane. It is found in the golgi apparatus. It localises to the trans-Golgi network membrane. Its subcellular location is the endosome membrane. The protein resides in the recycling endosome membrane. The protein localises to the cytoplasmic vesicle. It is found in the phagosome membrane. It localises to the cytoplasm. Its subcellular location is the cytoskeleton. The protein resides in the cilium basal body. The protein localises to the endoplasmic reticulum membrane. It is found in the perinuclear region. It localises to the lysosome. It catalyses the reaction GTP + H2O = GDP + phosphate + H(+). Its activity is regulated as follows. Regulated by guanine nucleotide exchange factors (GEFs) DENND4C and RABIF which promote the exchange of bound GDP for free GTP. Regulated by GTPase activating proteins (GAPs) including TBC1D21 which increase the GTP hydrolysis activity. Inhibited by GDP dissociation inhibitors GDI1 and GDI2 which prevent Rab-GDP dissociation. The small GTPases Rab are key regulators of intracellular membrane trafficking, from the formation of transport vesicles to their fusion with membranes. Rabs cycle between an inactive GDP-bound form and an active GTP-bound form that is able to recruit to membranes different set of downstream effectors directly responsible for vesicle formation, movement, tethering and fusion. That Rab is mainly involved in the biosynthetic transport of proteins from the Golgi to the plasma membrane. Regulates, for instance, SLC2A4/GLUT4 glucose transporter-enriched vesicles delivery to the plasma membrane. In parallel, it regulates the transport of TLR4, a toll-like receptor to the plasma membrane and therefore may be important for innate immune response. Also plays a specific role in asymmetric protein transport to the plasma membrane. In neurons, it is involved in axonogenesis through regulation of vesicular membrane trafficking toward the axonal plasma membrane. In epithelial cells, it regulates transport from the Golgi to the basolateral membrane. May play a role in the basolateral recycling pathway and in phagosome maturation. May play a role in endoplasmic reticulum dynamics and morphology controlling tubulation along microtubules and tubules fusion. Together with LRRK2, RAB8A, and RILPL1, it regulates ciliogenesis. When phosphorylated by LRRK2 on Thr-73, binds RILPL1 and inhibits ciliogenesis. Participates in the export of a subset of neosynthesized proteins through a Rab8-Rab10-Rab11-dependent endososomal export route. Targeted to and stabilized on stressed lysosomes through LRRK2 phosphorylation where it promotes the extracellular release of lysosomal content through EHBP1 and EHNP1L1 effector proteins. Its function is as follows. (Microbial infection) Upon Legionella pneumophila infection promotes endoplasmic reticulum recruitment and bacterial replication. Plays a role in remodeling the Legionella-containing vacuole (LCV) into an endoplasmic reticulum-like vacuole. The sequence is that of Ras-related protein Rab-10 from Homo sapiens (Human).